The sequence spans 405 residues: ATP phosphoribosyltransferase regulatory subunit (405 aa).

This sequence belongs to the class-II aminoacyl-tRNA synthetase family. HisZ subfamily. As to quaternary structure, heteromultimer composed of HisG and HisZ subunits.

It is found in the cytoplasm. It participates in amino-acid biosynthesis; L-histidine biosynthesis; L-histidine from 5-phospho-alpha-D-ribose 1-diphosphate: step 1/9. In terms of biological role, required for the first step of histidine biosynthesis. May allow the feedback regulation of ATP phosphoribosyltransferase activity by histidine. In Oceanobacillus iheyensis (strain DSM 14371 / CIP 107618 / JCM 11309 / KCTC 3954 / HTE831), this protein is ATP phosphoribosyltransferase regulatory subunit.